Consider the following 254-residue polypeptide: Pre-miRNA 5'-monophosphate methyltransferase (254 aa).

The Bin3-type SAM domain occupies 34 to 254 (ENRLSLIPEA…DRSLLLFRRQ (221 aa)). S-adenosyl-L-methionine-binding positions include Arg36, Asn66, Asp99, and 124–125 (DI).

It belongs to the methyltransferase superfamily.

The protein localises to the cytoplasm. It carries out the reaction a 5'-end 5'-phospho-ribonucleoside-RNA + S-adenosyl-L-methionine = a 5'-end (5'-methylphospho)-ribonucleoside-RNA + S-adenosyl-L-homocysteine. The catalysed reaction is a 5'-end 5'-phospho-ribonucleoside-RNA + 2 S-adenosyl-L-methionine = a 5'-end (5'-bismethylphospho)-ribonucleoside-RNA + 2 S-adenosyl-L-homocysteine. In terms of biological role, O-methyltransferase that specifically monomethylates 5'-monophosphate of cytoplasmic histidyl tRNA (tRNA(His)), acting as a capping enzyme by protecting tRNA(His) from cleavage by DICER1. Also able, with less efficiently, to methylate the 5' monophosphate of a subset of pre-miRNAs, acting as a negative regulator of miRNA processing. The 5' monophosphate of pre-miRNAs is recognized by DICER1 and is required for pre-miRNAs processing: methylation at this position reduces the processing of pre-miRNAs by DICER1. Was also reported to mediate dimethylation of pre-miR-145; however dimethylation cannot be reproduced by another group which observes a monomethylation of pre-miR-145. The protein is Pre-miRNA 5'-monophosphate methyltransferase (bcdin3d) of Danio rerio (Zebrafish).